The sequence spans 375 residues: Glutaconyl-CoA decarboxylase subunit beta (375 aa).

The next 11 helical transmembrane spans lie at 16–39 (GFVA…YLAI), 46–65 (LLLS…RTGF), 74–96 (LILG…GAMT), 107–130 (TLLL…LLGF), 137–153 (AIGI…IYLA), 160–178 (LLGA…VPLI), 208–232 (VVFP…IGML), 254–271 (ALMN…GLTM), 284–302 (IICL…GVLF), 316–332 (PLIG…AARV), and 345–369 (FLLM…GTML).

The protein belongs to the GcdB/MmdB/OadB family. In terms of assembly, heterooctamer consisting of two alpha, two beta, two gamma and two delta subunits. In terms of processing, the N-terminus is blocked.

The protein localises to the cell membrane. It carries out the reaction (2E)-glutaconyl-CoA + Na(+)(in) + H(+) = (2E)-butenoyl-CoA + Na(+)(out) + CO2. The protein operates within amino-acid degradation; L-glutamate degradation via hydroxyglutarate pathway; crotonoyl-CoA from L-glutamate: step 5/5. Its function is as follows. Tunnel subunit of the primary sodium pump glutaconyl-CoA decarboxylase (GCD). The polypeptide is Glutaconyl-CoA decarboxylase subunit beta (gcdB) (Acidaminococcus fermentans (strain ATCC 25085 / DSM 20731 / CCUG 9996 / CIP 106432 / VR4)).